Consider the following 285-residue polypeptide: 2-dehydro-3-deoxyphosphooctonate aldolase (285 aa).

It belongs to the KdsA family.

The protein localises to the cytoplasm. The catalysed reaction is D-arabinose 5-phosphate + phosphoenolpyruvate + H2O = 3-deoxy-alpha-D-manno-2-octulosonate-8-phosphate + phosphate. It functions in the pathway carbohydrate biosynthesis; 3-deoxy-D-manno-octulosonate biosynthesis; 3-deoxy-D-manno-octulosonate from D-ribulose 5-phosphate: step 2/3. Its pathway is bacterial outer membrane biogenesis; lipopolysaccharide biosynthesis. The sequence is that of 2-dehydro-3-deoxyphosphooctonate aldolase from Methylibium petroleiphilum (strain ATCC BAA-1232 / LMG 22953 / PM1).